The primary structure comprises 151 residues: S-ribosylhomocysteine lyase (151 aa).

Fe cation is bound by residues histidine 54, histidine 58, and cysteine 121.

Belongs to the LuxS family. Homodimer. Requires Fe cation as cofactor.

It catalyses the reaction S-(5-deoxy-D-ribos-5-yl)-L-homocysteine = (S)-4,5-dihydroxypentane-2,3-dione + L-homocysteine. Functionally, involved in the synthesis of autoinducer 2 (AI-2) which is secreted by bacteria and is used to communicate both the cell density and the metabolic potential of the environment. The regulation of gene expression in response to changes in cell density is called quorum sensing. Catalyzes the transformation of S-ribosylhomocysteine (RHC) to homocysteine (HC) and 4,5-dihydroxy-2,3-pentadione (DPD). This is S-ribosylhomocysteine lyase from Clostridium perfringens (strain ATCC 13124 / DSM 756 / JCM 1290 / NCIMB 6125 / NCTC 8237 / Type A).